The following is a 919-amino-acid chain: Synphilin-1 (919 aa).

Disordered stretches follow at residues 80–99 (SPLKHQPETLENNESDDQKN), 108–140 (GGESDLGPQPQELGPGDGVGGPPGKSSEPSTSL), and 287–313 (SSAAESKPEEQVSGLNRTSSQGPEERS). The segment covering 299-308 (SGLNRTSSQG) has biased composition (polar residues). ANK repeat units follow at residues 349-380 (NGNNLLHIAASQGHAECLQHLTSLMGEDCLNE), 384-413 (EKLTPAGLAIKNGQLECVRWMVSETEAIAE), 419-448 (DFPSLIHYAGCYGQEKILLWLLQFMQEQGI), and 456-485 (DGNSAVHVASQHGYLGCIQTLVEYGANVTM). Positions 515-552 (CMSLASQVVKLTKQLKEQTVERVTLQNQLQQFLEAQKS) form a coiled coil. Disordered stretches follow at residues 549–615 (AQKS…KDED), 666–713 (RLRQ…SMDS), and 728–919 (SGGR…NKAA). A compositionally biased stretch (low complexity) spans 555-571 (KSLPSSPSSPSSPASRK). One copy of the ANK 5 repeat lies at 603–632 (ASSRARPKAKDEDSDKILRQLLGKEISENV). Low complexity predominate over residues 667 to 685 (LRQLMQRSLSESDTDSNNS). Residues 686–700 (EDPKTTPVRKADRPR) are compositionally biased toward basic and acidic residues. The ANK 6 repeat unit spans residues 699–729 (PRPQPIVESVESMDSAESLHLMIKKHTLASG). Positions 774–785 (PSGDPQQPSPDS) are enriched in low complexity. Positions 833–842 (NGEKDKDKGR) are enriched in basic and acidic residues. Positions 844–854 (LQRTSTSNESG) are enriched in polar residues. A compositionally biased stretch (low complexity) spans 874 to 886 (NQNNNNNYQAANQ).

As to quaternary structure, homodimer. Heterodimer of isoform 1 and isoform 2. Interacts with SIAH1, SIAH2, SNCA, RNF19A and PRKN. Isoform 2 has a strong tendency to form aggregates and can sequester isoform 1. Ubiquitinated; mediated by SIAH1, SIAH2 or RNF19A and leading to its subsequent proteasomal degradation. In the absence of proteasomal degradation, ubiquitinated SNCAIP accumulates in cytoplasmic inclusion bodies. Isoform 2 is subject to limited ubiquitination that does not lead to proteasomal degradation. In terms of tissue distribution, detected in brain (at protein level). Widely expressed, with highest levels in brain, heart and placenta.

It localises to the cytoplasm. Isoform 2 inhibits the ubiquitin ligase activity of SIAH1 and inhibits proteasomal degradation of target proteins. Isoform 2 inhibits autoubiquitination and proteasomal degradation of SIAH1, and thereby increases cellular levels of SIAH. Isoform 2 modulates SNCA monoubiquitination by SIAH1. The protein is Synphilin-1 (SNCAIP) of Homo sapiens (Human).